The chain runs to 359 residues: Diacyltrehalose acyltransferase Chp2 (359 aa).

A helical membrane pass occupies residues 4-24 (VIAGAFAVWLVGWAGGFGTAI). The PE-PPE domain occupies 79–316 (PNAKHDLIDY…VLQPQIDAAY (238 aa)).

Belongs to the mycobacterial PPE family.

It localises to the cell inner membrane. Its activity is regulated as follows. Activity is probably potentiated by the DAT/PAT transporter MmpL10. Inhibited by the lipase inhibitor tetrahydrolipstatin (THL). Its function is as follows. Involved in the final steps of polyacyltrehalose (PAT) biosynthesis. Catalyzes the transfer of three mycolipenoyl groups onto diacyltrehalose (DAT) to form PAT. This chain is Diacyltrehalose acyltransferase Chp2, found in Mycobacterium tuberculosis (strain ATCC 25618 / H37Rv).